Here is a 700-residue protein sequence, read N- to C-terminus: Pyrroloquinoline quinone transporter (700 aa).

An N-terminal signal peptide occupies residues 1–23; sequence MKIFSVRQTVLPALLVLSPVVFA. The TBDR plug domain occupies 39–157; sequence SELDTPAAVS…SGGVMNVTTQ (119 aa). Beta stranded transmembrane passes span 132 to 136, 150 to 160, 162 to 171, 177 to 186, 195 to 204, 220 to 227, 233 to 241, 280 to 288, 295 to 301, 335 to 344, 350 to 358, 398 to 405, 411 to 419, 447 to 456, 464 to 468, 500 to 509, 511 to 520, 549 to 556, 563 to 570, 597 to 604, 611 to 617, 637 to 647, 651 to 659, and 689 to 697; these read NVEVL, GVMNVTTQTGQ, PPTIEASSYY, WRYGLKATGA, DVDYTVSTTR, LANAKLGV, SKLSLIFNS, QAGLRYERS, MSVMMYA, GIDSRWTHRG, VTFTTGLNY, DPYLQTQW, LSLDAGVRY, WLPAGSLKYA, YLAAG, TIEIGSKTRI, DGLLSLALFQ, GAELAWDQ, RVNASWTW, MGFASIGY, YAGTEAR, LVGLFTGYKYN, LTVDLFGRV, and YGVGMNIAW. The TBDR beta-barrel domain occupies 162-697; it reads PPTIEASSYY…NYGVGMNIAW (536 aa). Positions 680 to 700 match the TonB C-terminal box motif; it reads YYEPSPGRNYGVGMNIAWRFE.

The protein belongs to the TonB-dependent receptor family.

Its subcellular location is the cell outer membrane. Its function is as follows. Mediates the TonB-dependent high affinity transport across the outer membrane of pyrroloquinoline quinone (PQQ), a redox cofactor required for the activity of Gcd and Asd dehydrogenases. The uptake process is energised via the TonB-ExbBD complex. Not involved in the transport of an iron-containing substrate under laboratory conditions. This Escherichia coli (strain K12) protein is Pyrroloquinoline quinone transporter.